Reading from the N-terminus, the 366-residue chain is Galactoside alpha-(1,2)-fucosyltransferase 1 (366 aa).

Residues 1 to 8 lie on the Cytoplasmic side of the membrane; that stretch reads MWPRSHRH. Residues 9–25 traverse the membrane as a helical; Signal-anchor for type II membrane protein segment; sequence LCLAFLLVCVLSAISFL. Residues 26 to 366 lie on the Lumenal side of the membrane; it reads IHFHQDSIRH…LSPLWPLAEP (341 aa). 3 N-linked (GlcNAc...) asparagine glycosylation sites follow: Asn66, Asn302, and Asn328.

The protein belongs to the glycosyltransferase 11 family.

It localises to the golgi apparatus. The protein localises to the golgi stack membrane. The enzyme catalyses a beta-D-galactosyl-(1-&gt;4)-N-acetyl-beta-D-glucosaminyl derivative + GDP-beta-L-fucose = an alpha-L-Fuc-(1-&gt;2)-beta-D-Gal-(1-&gt;4)-beta-D-GlcNAc derivative + GDP + H(+). It catalyses the reaction a ganglioside GA1 + GDP-beta-L-fucose = a ganglioside Fuc-GA1 + GDP + H(+). It carries out the reaction a beta-D-Gal-(1-&gt;3)-beta-D-GlcNAc-(1-&gt;3)-beta-D-Gal-(1-&gt;4)-beta-D-Glc-(1&lt;-&gt;1')-Cer(d18:1(4E)) + GDP-beta-L-fucose = alpha-L-fucosyl-(1-&gt;2)- beta-D-galactosyl-(1-&gt;3)-N-acetyl-beta-D-glucosaminyl-(1-&gt;3)-beta-D-galactosyl-(1-&gt;4)-beta-D-glucosyl-(1&lt;-&gt;1')-N-acylsphing-4-enine + GDP + H(+). The catalysed reaction is a neolactoside nLc4Cer(d18:1(4E)) + GDP-beta-L-fucose = a neolactoside IV(2)-alpha-Fuc-nLc4Cer(d18:1(4E)) + GDP + H(+). The enzyme catalyses a ganglioside GM1 + GDP-beta-L-fucose = a ganglioside Fuc-GM1 + GDP + H(+). It catalyses the reaction beta-D-galactosyl-(1-&gt;3)-N-acetyl-D-galactosamine + GDP-beta-L-fucose = alpha-L-fucosyl-(1-&gt;2)-beta-D-galactosyl-(1-&gt;3)-N-acetyl-D-galactosamine + GDP + H(+). It functions in the pathway protein modification; protein glycosylation. Catalyzes the transfer of L-fucose, from a guanosine diphosphate-beta-L-fucose, to the terminal galactose residue of glycoconjugates through an alpha(1,2) linkage leading to H antigen synthesis that is an intermediate substrate in the synthesis of ABO blood group antigens. H antigen is essential for maturation of the glomerular layer of the main olfactory bulb, in cell migration and early cell-cell contacts during tumor associated angiogenesis. Preferentially fucosylates soluble lactose and to a lesser extent fucosylates glycolipids gangliosides GA1 and GM1a. This chain is Galactoside alpha-(1,2)-fucosyltransferase 1, found in Saimiri boliviensis boliviensis (Bolivian squirrel monkey).